The chain runs to 61 residues: Large ribosomal subunit protein bL28 (61 aa).

A disordered region spans residues 1–26 (MAKDYVTGKRTHFGNTRSHALNHSRR).

This sequence belongs to the bacterial ribosomal protein bL28 family.

The protein is Large ribosomal subunit protein bL28 of Lactiplantibacillus plantarum (strain ATCC BAA-793 / NCIMB 8826 / WCFS1) (Lactobacillus plantarum).